A 369-amino-acid polypeptide reads, in one-letter code: Peptide chain release factor 2 (369 aa).

The residue at position 250 (Gln-250) is an N5-methylglutamine.

The protein belongs to the prokaryotic/mitochondrial release factor family. Post-translationally, methylated by PrmC. Methylation increases the termination efficiency of RF2.

It is found in the cytoplasm. Functionally, peptide chain release factor 2 directs the termination of translation in response to the peptide chain termination codons UGA and UAA. The protein is Peptide chain release factor 2 (prfB) of Rickettsia prowazekii (strain Madrid E).